A 344-amino-acid polypeptide reads, in one-letter code: 4-dimethylallyltryptophan N-methyltransferase easF (344 aa).

The protein belongs to the methyltransferase superfamily. As to quaternary structure, homodimer.

It carries out the reaction 4-(3-methylbut-2-enyl)-L-tryptophan + S-adenosyl-L-methionine = 4-(3-methylbut-2-enyl)-L-abrine + S-adenosyl-L-homocysteine + H(+). It functions in the pathway alkaloid biosynthesis; ergot alkaloid biosynthesis. 4-dimethylallyltryptophan N-methyltransferase; part of the gene cluster that mediates the biosynthesis of fungal ergot alkaloid ergovaline, the predominant ergopeptine product in E.festucae var. lolii. DmaW catalyzes the first step of ergot alkaloid biosynthesis by condensing dimethylallyl diphosphate (DMAP) and tryptophan to form 4-dimethylallyl-L-tryptophan. The second step is catalyzed by the methyltransferase easF that methylates 4-dimethylallyl-L-tryptophan in the presence of S-adenosyl-L-methionine, resulting in the formation of 4-dimethylallyl-L-abrine. The catalase easC and the FAD-dependent oxidoreductase easE then transform 4-dimethylallyl-L-abrine to chanoclavine-I which is further oxidized by easD in the presence of NAD(+), resulting in the formation of chanoclavine-I aldehyde. Agroclavine dehydrogenase easG then mediates the conversion of chanoclavine-I aldehyde to agroclavine via a non-enzymatic adduct reaction: the substrate is an iminium intermediate that is formed spontaneously from chanoclavine-I aldehyde in the presence of glutathione. The presence of easA is not required to complete this reaction. Further conversion of agroclavine to paspalic acid is a two-step process involving oxidation of agroclavine to elymoclavine and of elymoclavine to paspalic acid, the second step being performed by the elymoclavine oxidase cloA. Paspalic acid is then further converted to D-lysergic acid. Ergovaline is assembled from D-lysergic acid and three different amino acids by the D-lysergyl-peptide-synthetase composed of a monomudular (lpsB) and a trimodular (lpsA) nonribosomal peptide synthetase subunit. The sequence is that of 4-dimethylallyltryptophan N-methyltransferase easF from Epichloe festucae var. lolii (Neotyphodium lolii).